Consider the following 278-residue polypeptide: OX-2 membrane glycoprotein (278 aa).

The N-terminal stretch at M1–A30 is a signal peptide. Positions Q31–V141 constitute an Ig-like V-type domain. The Extracellular portion of the chain corresponds to Q31–G232. Disulfide bonds link C51-C121 and C118-C136. N95, N103, and N110 each carry an N-linked (GlcNAc...) asparagine glycan. In terms of domain architecture, Ig-like C2-type spans Q142–G232. Residues N157, N181, and N190 are each glycosylated (N-linked (GlcNAc...) asparagine). A disulfide bond links C160 and C214. A helical transmembrane segment spans residues Y233–W259. Residues K260–T278 lie on the Cytoplasmic side of the membrane.

As to quaternary structure, CD200 and CD200R1 interact via their respective N-terminal Ig-like domains.

Its subcellular location is the cell membrane. Costimulates T-cell proliferation. May regulate myeloid cell activity in a variety of tissues. The sequence is that of OX-2 membrane glycoprotein (CD200) from Homo sapiens (Human).